A 128-amino-acid chain; its full sequence is Ribosome-binding factor A (128 aa).

The protein belongs to the RbfA family. As to quaternary structure, monomer. Binds 30S ribosomal subunits, but not 50S ribosomal subunits or 70S ribosomes.

The protein resides in the cytoplasm. In terms of biological role, one of several proteins that assist in the late maturation steps of the functional core of the 30S ribosomal subunit. Associates with free 30S ribosomal subunits (but not with 30S subunits that are part of 70S ribosomes or polysomes). Required for efficient processing of 16S rRNA. May interact with the 5'-terminal helix region of 16S rRNA. The polypeptide is Ribosome-binding factor A (Rippkaea orientalis (strain PCC 8801 / RF-1) (Cyanothece sp. (strain PCC 8801))).